Reading from the N-terminus, the 651-residue chain is Probable potassium transport system protein Kup (651 aa).

12 helical membrane passes run 41-61 (LVLGALGVVYGDIGTSPIYAF), 82-102 (VVSLIFWALTLVVTVKYVLFV), 130-150 (LILGVGICGAALFFGDAVITP), 163-183 (IVAPNLTPFVVPAAVVILVTL), 194-214 (VAIVFGPIMALWFVALGASGL), 235-255 (FLTVSPAVAFVTVGAVFLAMT), 276-296 (WLWIVFPCLLLNYFGQAAFIL), 309-329 (MIPSFALWPMVLLATAATVIA), 366-386 (IYIPRVNLLLGLAVVILVLGF), 395-415 (AYGIAVTGNMLVTTVLLYIAM), 426-446 (ALPIILGFLVIDMLFFSANII), and 450-470 (EGGWASIGIATVLVLIMWTWV).

The protein belongs to the HAK/KUP transporter (TC 2.A.72) family.

The protein localises to the cell inner membrane. The catalysed reaction is K(+)(in) + H(+)(in) = K(+)(out) + H(+)(out). Transport of potassium into the cell. Likely operates as a K(+):H(+) symporter. This is Probable potassium transport system protein Kup from Brucella abortus (strain S19).